Consider the following 633-residue polypeptide: Phosphomethylpyrimidine synthase (633 aa).

Residues asparagine 245, methionine 274, tyrosine 303, histidine 339, 359–361 (SRG), 400–403 (DGLR), and glutamate 439 each bind substrate. Residue histidine 443 participates in Zn(2+) binding. Substrate is bound at residue tyrosine 466. Histidine 507 is a Zn(2+) binding site. Cysteine 587, cysteine 590, and cysteine 595 together coordinate [4Fe-4S] cluster.

The protein belongs to the ThiC family. Homodimer. [4Fe-4S] cluster is required as a cofactor.

The enzyme catalyses 5-amino-1-(5-phospho-beta-D-ribosyl)imidazole + S-adenosyl-L-methionine = 4-amino-2-methyl-5-(phosphooxymethyl)pyrimidine + CO + 5'-deoxyadenosine + formate + L-methionine + 3 H(+). Its pathway is cofactor biosynthesis; thiamine diphosphate biosynthesis. Functionally, catalyzes the synthesis of the hydroxymethylpyrimidine phosphate (HMP-P) moiety of thiamine from aminoimidazole ribotide (AIR) in a radical S-adenosyl-L-methionine (SAM)-dependent reaction. The polypeptide is Phosphomethylpyrimidine synthase (Neisseria meningitidis serogroup A / serotype 4A (strain DSM 15465 / Z2491)).